We begin with the raw amino-acid sequence, 529 residues long: Type I restriction enzyme StySJI methylase subunit (529 aa).

Residues 148–153 (QYFTPR), 178–180 (TAG), and Glu216 contribute to the S-adenosyl-L-methionine site. The interval 405-444 (YGEDPHGLSPREEGEWSFNAEESEVADSEENKNTDQHQAT) is disordered. Residues 407–418 (EDPHGLSPREEG) are compositionally biased toward basic and acidic residues.

This sequence belongs to the N(4)/N(6)-methyltransferase family. As to quaternary structure, the type I restriction/modification system is composed of three polypeptides R, M and S; the restriction enzyme has stoichiometry R(2)M(2)S(1) while the methyltransferase is M(2)S(1).

The catalysed reaction is a 2'-deoxyadenosine in DNA + S-adenosyl-L-methionine = an N(6)-methyl-2'-deoxyadenosine in DNA + S-adenosyl-L-homocysteine + H(+). Functionally, the subtype gamma methyltransferase (M) subunit of a type I restriction enzyme. The M and S subunits together form a methyltransferase (MTase) that methylates two adenine residues of the sequence 5'-GAGN(6)GTRC-3'. In the presence of the R subunit the complex can also act as an endonuclease, binding to the same target sequence but cutting the DNA some distance from this site. Whether the DNA is cut or modified depends on the methylation state of the target sequence. When the target site is unmodified, the DNA is cut. When the target site is hemimethylated, the complex acts as a maintenance MTase modifying the DNA so that both strands become methylated. After locating a non-methylated recognition site, the enzyme complex serves as a molecular motor that translocates DNA in an ATP-dependent manner until a collision occurs that triggers cleavage. In Salmonella typhimurium (strain LT2 / SGSC1412 / ATCC 700720), this protein is Type I restriction enzyme StySJI methylase subunit.